The primary structure comprises 336 residues: Ketol-acid reductoisomerase (NADP(+)) 1 (336 aa).

The KARI N-terminal Rossmann domain maps to 2–181 (AKVYYEKDVT…GATRAGVLET (180 aa)). Residues 25-28 (YGSQ), Arg48, Ser52, and 82-85 (DELQ) contribute to the NADP(+) site. The active site involves His107. NADP(+) is bound at residue Gly133. Residues 182 to 327 (TFKEETETDL…RKLREMMPFV (146 aa)) enclose the KARI C-terminal knotted domain. Positions 190, 194, 226, and 230 each coordinate Mg(2+). Residue Ser251 coordinates substrate.

It belongs to the ketol-acid reductoisomerase family. Requires Mg(2+) as cofactor.

It catalyses the reaction (2R)-2,3-dihydroxy-3-methylbutanoate + NADP(+) = (2S)-2-acetolactate + NADPH + H(+). The enzyme catalyses (2R,3R)-2,3-dihydroxy-3-methylpentanoate + NADP(+) = (S)-2-ethyl-2-hydroxy-3-oxobutanoate + NADPH + H(+). It participates in amino-acid biosynthesis; L-isoleucine biosynthesis; L-isoleucine from 2-oxobutanoate: step 2/4. Its pathway is amino-acid biosynthesis; L-valine biosynthesis; L-valine from pyruvate: step 2/4. In terms of biological role, involved in the biosynthesis of branched-chain amino acids (BCAA). Catalyzes an alkyl-migration followed by a ketol-acid reduction of (S)-2-acetolactate (S2AL) to yield (R)-2,3-dihydroxy-isovalerate. In the isomerase reaction, S2AL is rearranged via a Mg-dependent methyl migration to produce 3-hydroxy-3-methyl-2-ketobutyrate (HMKB). In the reductase reaction, this 2-ketoacid undergoes a metal-dependent reduction by NADPH to yield (R)-2,3-dihydroxy-isovalerate. The sequence is that of Ketol-acid reductoisomerase (NADP(+)) 1 from Bacillus cereus (strain ATCC 14579 / DSM 31 / CCUG 7414 / JCM 2152 / NBRC 15305 / NCIMB 9373 / NCTC 2599 / NRRL B-3711).